Consider the following 330-residue polypeptide: Flotillin-like protein FloA (330 aa).

The next 2 helical transmembrane spans lie at 5–25 (FLPLILLGAAVLLLAIFFYYV) and 27–47 (FLLWISAKVSGVNISLIQLFL).

It belongs to the flotillin-like FloA family. Homooligomerizes.

It localises to the cell membrane. The protein localises to the membrane raft. Found in functional membrane microdomains (FMM) that may be equivalent to eukaryotic membrane rafts. FMMs are highly dynamic and increase in number as cells age. Flotillins are thought to be important factors in membrane fluidity. The chain is Flotillin-like protein FloA from Parabacteroides distasonis (strain ATCC 8503 / DSM 20701 / CIP 104284 / JCM 5825 / NCTC 11152).